A 370-amino-acid polypeptide reads, in one-letter code: Chaperone protein DnaJ (370 aa).

The 67-residue stretch at aspartate 7–glycine 73 folds into the J domain. The CR-type zinc-finger motif lies at glycine 144–arginine 226. Zn(2+)-binding residues include cysteine 157, cysteine 160, cysteine 174, cysteine 177, cysteine 200, cysteine 203, cysteine 214, and cysteine 217. 4 CXXCXGXG motif repeats span residues cysteine 157–glycine 164, cysteine 174–glycine 181, cysteine 200–glycine 207, and cysteine 214–glycine 221.

It belongs to the DnaJ family. Homodimer. Requires Zn(2+) as cofactor.

It is found in the cytoplasm. Functionally, participates actively in the response to hyperosmotic and heat shock by preventing the aggregation of stress-denatured proteins and by disaggregating proteins, also in an autonomous, DnaK-independent fashion. Unfolded proteins bind initially to DnaJ; upon interaction with the DnaJ-bound protein, DnaK hydrolyzes its bound ATP, resulting in the formation of a stable complex. GrpE releases ADP from DnaK; ATP binding to DnaK triggers the release of the substrate protein, thus completing the reaction cycle. Several rounds of ATP-dependent interactions between DnaJ, DnaK and GrpE are required for fully efficient folding. Also involved, together with DnaK and GrpE, in the DNA replication of plasmids through activation of initiation proteins. The polypeptide is Chaperone protein DnaJ (Thermotoga neapolitana (strain ATCC 49049 / DSM 4359 / NBRC 107923 / NS-E)).